The chain runs to 279 residues: HTH-type transcriptional regulator BhcR (279 aa).

Over residues 1–13 (MSVQIRKRGRPRG) the composition is skewed to basic residues. The disordered stretch occupies residues 1 to 21 (MSVQIRKRGRPRGRAGGLGAE). The HTH iclR-type domain occupies 26–87 (IRALDRALDI…SQTQAWHVGP (62 aa)). Positions 47–66 (LTEIAQRLDMAPSTVHRVLV) form a DNA-binding region, H-T-H motif. The IclR-ED domain maps to 102–271 (LVERARPLLR…ARELSFGMAP (170 aa)).

Functionally, transcriptional regulator of the bhc gene cluster involved in glycolate and glyoxylate assimilation via the beta-hydroxyaspartate cycle (BHAC). Glyoxylate negatively affects the interaction of BhcR with the promoter region of the bhc gene cluster. This Paracoccus denitrificans (strain Pd 1222) protein is HTH-type transcriptional regulator BhcR.